The following is a 479-amino-acid chain: PTS system sucrose-specific EIIBC component (479 aa).

The 84-residue stretch at 4 to 87 folds into the PTS EIIB type-1 domain; that stretch reads PAVAKELLTL…AKLTGMSEMS (84 aa). Cysteine 26 acts as the Phosphocysteine intermediate; for EIIB activity in catalysis. The next 11 helical transmembrane spans lie at 112 to 132, 158 to 178, 182 to 202, 204 to 224, 232 to 252, 264 to 284, 303 to 323, 345 to 365, 376 to 396, 403 to 423, and 448 to 468; these read IFVPIIPAIVAGGLLMGIYNL, MINTFANAPFVYLPILLAFSA, FGGNPYLGAALGMLMVHPDLL, GWGFGGASVSGNIPVWNILGF, QGSVLPVLVSAFILAKVELGL, LTPLLAIFIAGLLTFTVVGPF, AGFVGGAVFGLIYAPFVITGM, FIFPIAAMSNVSQGAAALAVG, IAIPSGVTGLLGITEPAMFGV, PFIAAVCAAALSSAFITMFNV, and IAGMVIAFLTAFVLTIVLGIG. Residues 120–477 enclose the PTS EIIC type-1 domain; sequence IVAGGLLMGI…GDRAKVGKKA (358 aa).

The protein localises to the cell inner membrane. The catalysed reaction is N(pros)-phospho-L-histidyl-[protein](out) + sucrose = sucrose 6(G)-phosphate(in) + L-histidyl-[protein]. In terms of biological role, the phosphoenolpyruvate-dependent sugar phosphotransferase system (sugar PTS), a major carbohydrate active transport system, catalyzes the phosphorylation of incoming sugar substrates concomitantly with their translocation across the cell membrane. This system is involved in sucrose transport. In Vibrio alginolyticus, this protein is PTS system sucrose-specific EIIBC component.